The primary structure comprises 1412 residues: MMQGNKKCTDGFSDTSSIGSVLDEADREVSNLTDRAFRSLCISEDTSFHDSDLALSPDVTSQVSGTFHQETVGHANRKSGIWSQLPSQGTEHSGWAATFQQQPKYVQGEEKYPKTSPLPTPVQRRLEVPISGLRSSSKPISKVSSLIRSFDRTETQSCDSRPPPSKPPALKNPPKFAHPPESGVNFCFDSAFLTVRRVPAEVSNTHQGSHQSGRAPGEQESPKNPEIASHSSDSLLRTPDHVAGSFEPRYPSPPLKPATAEPGRGKEWIPRRTFLHSENSAFESWDTHQPKLRERKDIAETTPESKAPKHYEDMPLLKEPYPAESKGSPYQARANCAQEENRSPSGSQSTSGAWGARDPGSQLFPVEGNASQIDPQVKRSKAPWRKPKTGKGGTDGPPDALEDKKQPNRRGLPLYSKLNPQGQLPENGVLDMPEESNDHYNPPFNISKLLTPIISTKHVLETSDTQPVEISPSPPGQLNGYQEKESSEAQSRDSYKSKAPSLLFNLKDVRKRVKSTYSPLPLLKGFDEKTRGKLDSKQEPLSNGVTLPDGLEENPPTELLPDNVPGVLHSSTQKDPAINSRESFAVSHPTFSSPSASSQTHFCVNGEAAESNSNEKEEANGESELDPSKGGGHPDCRENLPRKHLSLKLFNRESEMGPAMAEMKPHQLENGLSRSVSQETETERETGFQSLPLNQKFSPGPLSPEEEDVFYSDSQSDFTPCRQTKAKFSTSSSDQSFASFEDQQKVCFTEGPQEDRKSHVSAGDKQRDETAVEKEESQQCASRNEHRGVDEQRQEEIQRKAQGVSGGRPRKASAEDLSARGSWMGADKDTAHTHAKDPTPLPASTNKHRLFPIKDNTLRATPVIKPIILPLLRTVSSEDSLSSGHQENELPKQLWGEDAGGLSASESQEMPNTPLSNNDVPGTQHRCMVCEDVQEDPVHTAAQDETSQQTRKGSFSFLPPVEEENRMKPSPDTAGEGLAQEKSKSADLGKLGVPQRIPTIALLPDDLEDSPPSLPQHTYWEEQGFKGHFLSAPRAGPSGRRLVPSEAETSPNPSSLGESSTCSPAASSIWEEASQAAGEHWQRQEPPGPNPWASPGPTGLTRREDMTHGLTWEAEGSDPSDFRALSPRGILLADAAEKPEPPALLEKAAGKPPAVPPKTEKALRRAKKLASKRRKSDQLLEKHTEAWEGKSFTEDTQGTERRPVSPGKGPRPRFPAIRSLPPPTHRHSVSCGWEPTGRRPWGPQSLTPLPPYPATQKVLQDPQSGQYFVFDVPLQVKIKTFYDPETGKYVKVSVPSSEEASSEPPLQDALAAPYLLYPGFRPVPVTSVMPLRCSSQLAAPTFLRQGSGHRPQSSQGSRLQPPPERLGESTQHASGQCPRGPSHSPEKESAEAPRLSIISTDDLEDFATEGVS.

Disordered regions lie at residues 106–177 (VQGE…PKFA), 202–443 (VSNT…YNPP), 460–500 (LETS…SKAP), 517–848 (YSPL…TNKH), 877–923 (SEDS…VPGT), 935–1255 (EDPV…YPAT), and 1344–1412 (RQGS…EGVS). Position 120 is a phosphothreonine (T120). Low complexity predominate over residues 135 to 145 (SSSKPISKVSS). Residues 161–171 (RPPPSKPPALK) show a composition bias toward pro residues. Positions 202-212 (VSNTHQGSHQS) are enriched in polar residues. 2 stretches are compositionally biased toward basic and acidic residues: residues 285–299 (WDTH…KDIA) and 306–316 (KAPKHYEDMPL). The residue at position 328 (S328) is a Phosphoserine. Residues 343–352 (SPSGSQSTSG) show a composition bias toward polar residues. The segment covering 378-389 (KRSKAPWRKPKT) has biased composition (basic residues). S473 is subject to Phosphoserine. 2 stretches are compositionally biased toward basic and acidic residues: residues 482 to 496 (QEKE…DSYK) and 525 to 538 (GFDE…DSKQ). The segment covering 587–612 (SHPTFSSPSASSQTHFCVNGEAAESN) has biased composition (low complexity). The span at 632 to 641 (GHPDCRENLP) shows a compositional bias: basic and acidic residues. Composition is skewed to polar residues over residues 670–679 (NGLSRSVSQE), 687–697 (GFQSLPLNQKF), and 712–722 (SDSQSDFTPCR). Residues 728–741 (FSTSSSDQSFASFE) are compositionally biased toward low complexity. Residues 753–799 (QEDRKSHVSAGDKQRDETAVEKEESQQCASRNEHRGVDEQRQEEIQR) show a composition bias toward basic and acidic residues. Phosphoserine is present on S813. The span at 826-837 (ADKDTAHTHAKD) shows a compositional bias: basic and acidic residues. Polar residues-rich tracts occupy residues 904 to 921 (ASES…NDVP), 943 to 953 (QDETSQQTRKG), and 1047 to 1066 (AETS…SPAA). The span at 1164-1175 (RRAKKLASKRRK) shows a compositional bias: basic residues. Over residues 1176–1203 (SDQLLEKHTEAWEGKSFTEDTQGTERRP) the composition is skewed to basic and acidic residues. A compositionally biased stretch (acidic residues) spans 1401–1412 (DDLEDFATEGVS).

In terms of assembly, interacts with FHL2. As to expression, expressed in the heart and skeletal muscle (at protein level).

The protein localises to the cytoplasm. The protein resides in the myofibril. It is found in the sarcomere. It localises to the z line. Plays an important role in cardiomyocyte hypertrophy via activation of the calcineurin/NFAT signaling pathway. This Mus musculus (Mouse) protein is Cardiac-enriched FHL2-interacting protein.